Here is a 151-residue protein sequence, read N- to C-terminus: Small ribosomal subunit protein uS9 (151 aa).

Over residues 1–19 (MTETTPAPQTPAAPAGPAQ) the composition is skewed to low complexity. Disordered regions lie at residues 1-20 (MTET…PAQS) and 121-151 (KAGF…YSKR). The segment covering 127-136 (RDPRATERKK) has biased composition (basic and acidic residues). Residues 137–151 (YGLKKARKAPQYSKR) are compositionally biased toward basic residues.

It belongs to the universal ribosomal protein uS9 family.

This is Small ribosomal subunit protein uS9 (rpsI) from Mycobacterium bovis (strain ATCC BAA-935 / AF2122/97).